We begin with the raw amino-acid sequence, 586 residues long: 2-succinyl-5-enolpyruvyl-6-hydroxy-3-cyclohexene-1-carboxylate synthase (586 aa).

This sequence belongs to the TPP enzyme family. MenD subfamily. As to quaternary structure, homodimer. Requires Mg(2+) as cofactor. Mn(2+) serves as cofactor. It depends on thiamine diphosphate as a cofactor.

It catalyses the reaction isochorismate + 2-oxoglutarate + H(+) = 5-enolpyruvoyl-6-hydroxy-2-succinyl-cyclohex-3-ene-1-carboxylate + CO2. The protein operates within quinol/quinone metabolism; 1,4-dihydroxy-2-naphthoate biosynthesis; 1,4-dihydroxy-2-naphthoate from chorismate: step 2/7. Its pathway is cofactor biosynthesis; phylloquinone biosynthesis. Functionally, catalyzes the thiamine diphosphate-dependent decarboxylation of 2-oxoglutarate and the subsequent addition of the resulting succinic semialdehyde-thiamine pyrophosphate anion to isochorismate to yield 2-succinyl-5-enolpyruvyl-6-hydroxy-3-cyclohexene-1-carboxylate (SEPHCHC). The polypeptide is 2-succinyl-5-enolpyruvyl-6-hydroxy-3-cyclohexene-1-carboxylate synthase (Acaryochloris marina (strain MBIC 11017)).